Here is a 1514-residue protein sequence, read N- to C-terminus: Neuropathy target esterase sws (1514 aa).

At 1–34 the chain is on the lumenal side; it reads MDVLELLRASATGSYTALFSDAWCQYVSKQITNS. The helical transmembrane segment at 35–55 threads the bilayer; sequence MYLYCALGVLSMVFLAWFMYF. The Cytoplasmic segment spans residues 56–1514; that stretch reads KRLARIRLRD…KGGAYNETKN (1459 aa). A nucleoside 3',5'-cyclic phosphate is bound at residue 175 to 302; it reads IFGHFEKPVF…IRVIQVIMIR (128 aa). The span at 337-352 shows a compositional bias: polar residues; sequence STHSSQCSRQTGSQPT. The disordered stretch occupies residues 337–418; it reads STHSSQCSRQ…NPNPDVINTS (82 aa). Low complexity predominate over residues 356-374; that stretch reads PAPTCSNTTTTASPTTANT. Phosphoserine is present on serine 457. A nucleoside 3',5'-cyclic phosphate-binding positions include 515-644 and 633-760; these read ELGL…VVRR and IVLD…LSHR. The region spanning 987–1153 is the PNPLA domain; that stretch reads LVLGGGGARG…VNNLPGQLWR (167 aa). A GXGXXG motif is present at residues 991-996; sequence GGGARG. Residues 1018 to 1022 carry the GXSXG motif; the sequence is GVSIG. Residue serine 1020 is the Nucleophile of the active site. Aspartate 1140 (proton acceptor) is an active-site residue. The DGA/G motif lies at 1140-1142; sequence DGG. Serine 1234 bears the Phosphoserine mark. The tract at residues 1409-1514 is disordered; it reads EKSIHSAATS…KGGAYNETKN (106 aa). Basic and acidic residues-rich tracts occupy residues 1425–1449 and 1456–1470; these read RSRE…ETER and LDRK…KEPE. Over residues 1471–1489 the composition is skewed to acidic residues; it reads QEQELETEEPNQENTEVEE.

Belongs to the NTE family. Interacts with Pka-C3; interaction inhibits the catalytic function of Pka-C3 and the esterase activity of sws.

Its subcellular location is the endoplasmic reticulum membrane. It carries out the reaction a 1-acyl-sn-glycero-3-phosphocholine + H2O = sn-glycerol 3-phosphocholine + a fatty acid + H(+). Its function is as follows. Phospholipase B that deacylates intracellular phosphatidylcholine (PtdCho), generating glycerophosphocholine (GroPtdCho). This deacylation occurs at both sn-2 and sn-1 positions of PtdCho. Its specific chemical modification by certain organophosphorus (OP) compounds leads to distal axonopathy. Plays a role in the signaling mechanism between neurons and glia that regulates glia wrapping during development of the adult brain. Essential for membrane lipid homeostasis and cell survival in both neurons and glia of the adult brain. This chain is Neuropathy target esterase sws, found in Drosophila ananassae (Fruit fly).